A 476-amino-acid polypeptide reads, in one-letter code: ATP synthase subunit beta (476 aa).

Residue 152–159 participates in ATP binding; it reads GGAGVGKT.

This sequence belongs to the ATPase alpha/beta chains family. In terms of assembly, F-type ATPases have 2 components, CF(1) - the catalytic core - and CF(0) - the membrane proton channel. CF(1) has five subunits: alpha(3), beta(3), gamma(1), delta(1), epsilon(1). CF(0) has three main subunits: a(1), b(2) and c(9-12). The alpha and beta chains form an alternating ring which encloses part of the gamma chain. CF(1) is attached to CF(0) by a central stalk formed by the gamma and epsilon chains, while a peripheral stalk is formed by the delta and b chains.

Its subcellular location is the cell inner membrane. It carries out the reaction ATP + H2O + 4 H(+)(in) = ADP + phosphate + 5 H(+)(out). In terms of biological role, produces ATP from ADP in the presence of a proton gradient across the membrane. The catalytic sites are hosted primarily by the beta subunits. The sequence is that of ATP synthase subunit beta from Granulibacter bethesdensis (strain ATCC BAA-1260 / CGDNIH1).